The following is a 738-amino-acid chain: DNA repair and recombination protein RAD54-like (738 aa).

The segment at 1–31 (MRRSLAPSQVAKRKQGPDSDDEEDWEPDMEP) is disordered. Residues 18 to 29 (DSDDEEDWEPDM) show a composition bias toward acidic residues. Residues 164 to 339 (GRRIENSYGC…FSLVHFVNSG (176 aa)) enclose the Helicase ATP-binding domain. Position 177–184 (177–184 (DEMGLGKT)) interacts with ATP. A DEAH box motif is present at residues 290 to 293 (DEGH). The Helicase C-terminal domain occupies 493-647 (LVLDYILAMT…CVVDEEQDVE (155 aa)). Serine 566 and serine 567 each carry phosphoserine.

As to quaternary structure, homohexamer. Interacts with RAD51. In terms of processing, phosphorylated. Phosphorylations at Ser-566 and Ser-567 allow efficient removal of RAD51 filaments from DNA.

The enzyme catalyses ATP + H2O = ADP + phosphate + H(+). Its function is as follows. Plays an essential role in homologous recombination (HR) which is a major pathway for repairing DNA double-strand breaks (DSBs), single-stranded DNA (ssDNA) gaps, and stalled or collapsed replication forks. Acts as a molecular motor during the homology search and guides RAD51 ssDNA along a donor dsDNA thereby changing the homology search from the diffusion-based mechanism to a motor-guided mechanism. Also plays an essential role in RAD51-mediated synaptic complex formation which consists of three strands encased in a protein filament formed once homology is recognized. Once DNA strand exchange occured, dissociates RAD51 from nucleoprotein filaments formed on dsDNA. The chain is DNA repair and recombination protein RAD54-like (rad54l) from Danio rerio (Zebrafish).